The chain runs to 477 residues: Pup--protein ligase (477 aa).

Mg(2+) is bound at residue Glu16. Arg60 serves as a coordination point for ATP. Residue Tyr62 coordinates Mg(2+). The Proton acceptor role is filled by Asp64. Mg(2+) is bound at residue Glu70. ATP-binding residues include Thr73 and Trp441.

The protein belongs to the Pup ligase/Pup deamidase family. Pup-conjugating enzyme subfamily.

It catalyses the reaction ATP + [prokaryotic ubiquitin-like protein]-L-glutamate + [protein]-L-lysine = ADP + phosphate + N(6)-([prokaryotic ubiquitin-like protein]-gamma-L-glutamyl)-[protein]-L-lysine.. The protein operates within protein degradation; proteasomal Pup-dependent pathway. Its pathway is protein modification; protein pupylation. Catalyzes the covalent attachment of the prokaryotic ubiquitin-like protein modifier Pup to the proteasomal substrate proteins, thereby targeting them for proteasomal degradation. This tagging system is termed pupylation. The ligation reaction involves the side-chain carboxylate of the C-terminal glutamate of Pup and the side-chain amino group of a substrate lysine. The protein is Pup--protein ligase of Corynebacterium kroppenstedtii (strain DSM 44385 / JCM 11950 / CIP 105744 / CCUG 35717).